A 106-amino-acid polypeptide reads, in one-letter code: Transcription and mRNA export factor SUS1 (106 aa).

It belongs to the ENY2 family. As to quaternary structure, component of the nuclear pore complex (NPC)-associated TREX-2 complex (transcription and export complex 2), composed of at least SUS1, SAC3, THP1, SEM1, and CDC31. TREX-2 contains 2 SUS1 chains. The TREX-2 complex interacts with the nucleoporin NUP1. Component of the 1.8 MDa SAGA transcription coactivator-HAT complex. SAGA is built of 5 distinct domains with specialized functions. Within the SAGA complex, SUS1, SGF11, SGF73 and UBP8 form an additional subcomplex of SAGA called the DUB module (deubiquitination module). Interacts directly with THP1, SAC3, SGF11, and with the RNA polymerase II.

It is found in the nucleus. It localises to the nucleoplasm. The protein localises to the cytoplasm. The protein resides in the P-body. In terms of biological role, involved in mRNA export coupled transcription activation by association with both the TREX-2 and the SAGA complexes. At the promoters, SAGA is required for recruitment of the basal transcription machinery. It influences RNA polymerase II transcriptional activity through different activities such as TBP interaction and promoter selectivity, interaction with transcription activators, and chromatin modification through histone acetylation and deubiquitination. Within the SAGA complex, participates in a subcomplex required for deubiquitination of H2B and for the maintenance of steady-state H3 methylation levels. The TREX-2 complex functions in docking export-competent ribonucleoprotein particles (mRNPs) to the nuclear entrance of the nuclear pore complex (nuclear basket). TREX-2 participates in mRNA export and accurate chromatin positioning in the nucleus by tethering genes to the nuclear periphery. May also be involved in cytoplasmic mRNA decay by interaction with components of P-bodies. The polypeptide is Transcription and mRNA export factor SUS1 (Mycosarcoma maydis (Corn smut fungus)).